We begin with the raw amino-acid sequence, 161 residues long: NADH-quinone oxidoreductase subunit I (161 aa).

4Fe-4S ferredoxin-type domains follow at residues 52–82 (LRRY…IESE) and 92–121 (SRYD…ETRV). 8 residues coordinate [4Fe-4S] cluster: Cys62, Cys65, Cys68, Cys72, Cys101, Cys104, Cys107, and Cys111.

This sequence belongs to the complex I 23 kDa subunit family. In terms of assembly, NDH-1 is composed of 14 different subunits. Subunits NuoA, H, J, K, L, M, N constitute the membrane sector of the complex. [4Fe-4S] cluster serves as cofactor.

It localises to the cell inner membrane. The catalysed reaction is a quinone + NADH + 5 H(+)(in) = a quinol + NAD(+) + 4 H(+)(out). Functionally, NDH-1 shuttles electrons from NADH, via FMN and iron-sulfur (Fe-S) centers, to quinones in the respiratory chain. The immediate electron acceptor for the enzyme in this species is believed to be ubiquinone. Couples the redox reaction to proton translocation (for every two electrons transferred, four hydrogen ions are translocated across the cytoplasmic membrane), and thus conserves the redox energy in a proton gradient. This Azoarcus sp. (strain BH72) protein is NADH-quinone oxidoreductase subunit I.